Here is a 296-residue protein sequence, read N- to C-terminus: Ribosomal RNA small subunit methyltransferase H (296 aa).

S-adenosyl-L-methionine is bound by residues 41 to 43 (GGH), Asp60, Phe87, Asp103, and Gln110.

This sequence belongs to the methyltransferase superfamily. RsmH family.

It localises to the cytoplasm. The enzyme catalyses cytidine(1402) in 16S rRNA + S-adenosyl-L-methionine = N(4)-methylcytidine(1402) in 16S rRNA + S-adenosyl-L-homocysteine + H(+). Functionally, specifically methylates the N4 position of cytidine in position 1402 (C1402) of 16S rRNA. In Synechococcus elongatus (strain ATCC 33912 / PCC 7942 / FACHB-805) (Anacystis nidulans R2), this protein is Ribosomal RNA small subunit methyltransferase H.